Here is a 213-residue protein sequence, read N- to C-terminus: Outer-membrane lipoprotein LolB (213 aa).

A signal peptide spans 1-24 (MNNLSYFTKTKLVWVILSLSLLSA). Residue Cys-25 is the site of N-palmitoyl cysteine attachment. Cys-25 carries the S-diacylglycerol cysteine lipid modification.

This sequence belongs to the LolB family. In terms of assembly, monomer.

It is found in the cell outer membrane. Functionally, plays a critical role in the incorporation of lipoproteins in the outer membrane after they are released by the LolA protein. The protein is Outer-membrane lipoprotein LolB of Shewanella woodyi (strain ATCC 51908 / MS32).